The chain runs to 265 residues: Mlc titration factor A (265 aa).

Zn(2+) is bound by residues His111, His148, His152, and Glu211.

The protein belongs to the MtfA family. As to quaternary structure, interacts with Mlc. Zn(2+) serves as cofactor.

It localises to the cytoplasm. In terms of biological role, involved in the modulation of the activity of the glucose-phosphotransferase system (glucose-PTS). Interacts with the transcriptional repressor Mlc, preventing its interaction with DNA and leading to the modulation of expression of genes regulated by Mlc, including ptsG, which encodes the PTS system glucose-specific EIICB component. Shows zinc-dependent metallopeptidase activity. The sequence is that of Mlc titration factor A from Escherichia coli (strain ATCC 8739 / DSM 1576 / NBRC 3972 / NCIMB 8545 / WDCM 00012 / Crooks).